A 630-amino-acid chain; its full sequence is Plastin-3 (630 aa).

2 consecutive EF-hand domains span residues 12–47 (DELD…ANMP) and 52–87 (KVRE…VKSS). Ca(2+) is bound by residues Asp25, Asn27, Asn29, Glu36, Asp65, Asn67, Asp69, Lys71, and Glu76. Actin-binding regions lie at residues 109-382 (TSEL…ALTK) and 383-627 (PENQ…GRGM). Calponin-homology (CH) domains lie at 123-239 (EEEK…KIGL) and 267-378 (LSPE…NKYP). Phosphoserine is present on residues Ser268, Ser293, Ser326, and Ser339. At Thr391 the chain carries Phosphothreonine. Calponin-homology (CH) domains lie at 397–506 (TREE…RRYT) and 518–627 (KATD…GRGM).

Monomer.

Its subcellular location is the cytoplasm. Functionally, actin-bundling protein. The sequence is that of Plastin-3 (Pls3) from Rattus norvegicus (Rat).